A 526-amino-acid chain; its full sequence is Probable Xaa-Pro aminopeptidase MGG_05684 (526 aa).

Residues aspartate 285, aspartate 296, glutamate 447, and glutamate 488 each contribute to the Mn(2+) site.

It belongs to the peptidase M24B family. It depends on Mn(2+) as a cofactor.

The enzyme catalyses Release of any N-terminal amino acid, including proline, that is linked to proline, even from a dipeptide or tripeptide.. Catalyzes the removal of a penultimate prolyl residue from the N-termini of peptides. The chain is Probable Xaa-Pro aminopeptidase MGG_05684 from Pyricularia oryzae (strain 70-15 / ATCC MYA-4617 / FGSC 8958) (Rice blast fungus).